Reading from the N-terminus, the 173-residue chain is NADH-ubiquinone oxidoreductase chain 6 (173 aa).

5 helical membrane passes run 1 to 21 (MTYF…AVAS), 27 to 47 (YGVV…LSLG), 48 to 68 (VSFV…VVFV), 87 to 107 (VVGY…IGGF), and 139 to 159 (CGVG…FVVL).

The protein belongs to the complex I subunit 6 family.

It localises to the mitochondrion membrane. It catalyses the reaction a ubiquinone + NADH + 5 H(+)(in) = a ubiquinol + NAD(+) + 4 H(+)(out). Core subunit of the mitochondrial membrane respiratory chain NADH dehydrogenase (Complex I) that is believed to belong to the minimal assembly required for catalysis. Complex I functions in the transfer of electrons from NADH to the respiratory chain. The immediate electron acceptor for the enzyme is believed to be ubiquinone. This is NADH-ubiquinone oxidoreductase chain 6 (MT-ND6) from Cepphus columba (Pigeon guillemot).